A 293-amino-acid polypeptide reads, in one-letter code: Ribosomal protein L11 methyltransferase (293 aa).

Threonine 145, glycine 166, aspartate 188, and asparagine 230 together coordinate S-adenosyl-L-methionine.

The protein belongs to the methyltransferase superfamily. PrmA family.

It localises to the cytoplasm. It catalyses the reaction L-lysyl-[protein] + 3 S-adenosyl-L-methionine = N(6),N(6),N(6)-trimethyl-L-lysyl-[protein] + 3 S-adenosyl-L-homocysteine + 3 H(+). Methylates ribosomal protein L11. This chain is Ribosomal protein L11 methyltransferase, found in Shigella sonnei (strain Ss046).